The sequence spans 291 residues: Citrate lyase subunit beta (291 aa).

Substrate is bound by residues Arg-66 and Glu-129. Glu-129 and Asp-156 together coordinate Mg(2+).

The protein belongs to the HpcH/HpaI aldolase family. Citrate lyase beta subunit subfamily. As to quaternary structure, oligomer with a subunit composition of (alpha,beta,gamma)6. Mg(2+) is required as a cofactor.

The protein localises to the cytoplasm. The catalysed reaction is citrate = oxaloacetate + acetate. The enzyme catalyses (3S)-citryl-CoA = oxaloacetate + acetyl-CoA. Represents a citryl-ACP lyase. This chain is Citrate lyase subunit beta (citE), found in Haemophilus influenzae (strain ATCC 51907 / DSM 11121 / KW20 / Rd).